Consider the following 370-residue polypeptide: Putative alanine racemase 2 (370 aa).

Residue Lys38 is the Proton acceptor; specific for D-alanine of the active site. The residue at position 38 (Lys38) is an N6-(pyridoxal phosphate)lysine. The active-site Proton acceptor; specific for L-alanine is Tyr266.

Belongs to the alanine racemase family. Pyridoxal 5'-phosphate serves as cofactor.

The enzyme catalyses L-alanine = D-alanine. The polypeptide is Putative alanine racemase 2 (alr2) (Schizosaccharomyces pombe (strain 972 / ATCC 24843) (Fission yeast)).